The sequence spans 159 residues: Cyclic pyranopterin monophosphate synthase (159 aa).

Substrate contacts are provided by residues 75-77 (LCH) and 113-114 (ME). Aspartate 128 is an active-site residue.

It belongs to the MoaC family. As to quaternary structure, homohexamer; trimer of dimers.

The enzyme catalyses (8S)-3',8-cyclo-7,8-dihydroguanosine 5'-triphosphate = cyclic pyranopterin phosphate + diphosphate. It functions in the pathway cofactor biosynthesis; molybdopterin biosynthesis. Its function is as follows. Catalyzes the conversion of (8S)-3',8-cyclo-7,8-dihydroguanosine 5'-triphosphate to cyclic pyranopterin monophosphate (cPMP). The chain is Cyclic pyranopterin monophosphate synthase from Yersinia pseudotuberculosis serotype O:1b (strain IP 31758).